The primary structure comprises 190 residues: Peptidyl-tRNA hydrolase (190 aa).

F14 provides a ligand contact to tRNA. The active-site Proton acceptor is the H19. TRNA is bound by residues M64, N66, and N112.

The protein belongs to the PTH family. In terms of assembly, monomer.

The protein localises to the cytoplasm. It catalyses the reaction an N-acyl-L-alpha-aminoacyl-tRNA + H2O = an N-acyl-L-amino acid + a tRNA + H(+). Its function is as follows. Hydrolyzes ribosome-free peptidyl-tRNAs (with 1 or more amino acids incorporated), which drop off the ribosome during protein synthesis, or as a result of ribosome stalling. In terms of biological role, catalyzes the release of premature peptidyl moieties from peptidyl-tRNA molecules trapped in stalled 50S ribosomal subunits, and thus maintains levels of free tRNAs and 50S ribosomes. The protein is Peptidyl-tRNA hydrolase of Staphylococcus aureus (strain bovine RF122 / ET3-1).